The primary structure comprises 117 residues: Large ribosomal subunit protein eL34 (117 aa).

Phosphoserine is present on serine 12. Polar residues predominate over residues 16 to 28; that stretch reads ASNKTRLSRTPGQ. The segment at 16–35 is disordered; the sequence is ASNKTRLSRTPGQQDRLPLH. Residue lysine 108 forms a Glycyl lysine isopeptide (Lys-Gly) (interchain with G-Cter in SUMO2) linkage.

It belongs to the eukaryotic ribosomal protein eL34 family. As to quaternary structure, component of the large ribosomal subunit.

The protein localises to the cytoplasm. The protein resides in the cytosol. It localises to the endoplasmic reticulum. Its function is as follows. Component of the large ribosomal subunit. The ribosome is a large ribonucleoprotein complex responsible for the synthesis of proteins in the cell. This chain is Large ribosomal subunit protein eL34 (RPL34), found in Vicugna pacos (Alpaca).